Consider the following 222-residue polypeptide: Pleckstrin homology domain-containing family B member 2 (222 aa).

A PH domain is found at 2–109 (AFVKSGWLLR…WKFTLQDSRT (108 aa)). K20 is an a 1,2-diacyl-sn-glycero-3-phospho-L-serine binding site.

The protein resides in the recycling endosome membrane. Involved in retrograde transport of recycling endosomes. The polypeptide is Pleckstrin homology domain-containing family B member 2 (PLEKHB2) (Pongo abelii (Sumatran orangutan)).